The primary structure comprises 100 residues: MGRRRSDIYEAVRRVLNYPLEDRGDYSIVYRHRVEGVGEVLREARLESVARVDKWAVHLVNGDSIPLHRIVEIRGPRGETVWRRGLGWLEDLSSRRRTAD.

It belongs to the UPF0248 family.

The chain is UPF0248 protein APE_0939 from Aeropyrum pernix (strain ATCC 700893 / DSM 11879 / JCM 9820 / NBRC 100138 / K1).